Reading from the N-terminus, the 182-residue chain is Orotate phosphoribosyltransferase (182 aa).

5-phospho-alpha-D-ribose 1-diphosphate contacts are provided by residues Arg93, Lys94, Lys97, and 119–127 (EDIATTGTS). Positions 123 and 151 each coordinate orotate.

It belongs to the purine/pyrimidine phosphoribosyltransferase family. PyrE subfamily. As to quaternary structure, homodimer. The cofactor is Mg(2+).

The enzyme catalyses orotidine 5'-phosphate + diphosphate = orotate + 5-phospho-alpha-D-ribose 1-diphosphate. Its pathway is pyrimidine metabolism; UMP biosynthesis via de novo pathway; UMP from orotate: step 1/2. Functionally, catalyzes the transfer of a ribosyl phosphate group from 5-phosphoribose 1-diphosphate to orotate, leading to the formation of orotidine monophosphate (OMP). The protein is Orotate phosphoribosyltransferase of Haloquadratum walsbyi (strain DSM 16790 / HBSQ001).